A 178-amino-acid polypeptide reads, in one-letter code: Large ribosomal subunit protein uL16 (178 aa).

This sequence belongs to the universal ribosomal protein uL16 family.

In Pyrobaculum calidifontis (strain DSM 21063 / JCM 11548 / VA1), this protein is Large ribosomal subunit protein uL16.